Here is a 118-residue protein sequence, read N- to C-terminus: Small ribosomal subunit protein uS13 (118 aa).

Positions 97-118 (VRGQRTKTNARTCKGPRKAIKK) are disordered.

Belongs to the universal ribosomal protein uS13 family. As to quaternary structure, part of the 30S ribosomal subunit. Forms a loose heterodimer with protein S19. Forms two bridges to the 50S subunit in the 70S ribosome.

Its function is as follows. Located at the top of the head of the 30S subunit, it contacts several helices of the 16S rRNA. In the 70S ribosome it contacts the 23S rRNA (bridge B1a) and protein L5 of the 50S subunit (bridge B1b), connecting the 2 subunits; these bridges are implicated in subunit movement. Contacts the tRNAs in the A and P-sites. This is Small ribosomal subunit protein uS13 from Buchnera aphidicola subsp. Schizaphis graminum (strain Sg).